Reading from the N-terminus, the 369-residue chain is Glutamate 5-kinase (369 aa).

Lys14 serves as a coordination point for ATP. The substrate site is built by Ser56, Asp143, and Asn155. ATP contacts are provided by residues 175–176 and 215–221; these read SD and TGGMASK. In terms of domain architecture, PUA spans 277-351; it reads AGKIRLDDGA…GMQTQDLPDG (75 aa).

It belongs to the glutamate 5-kinase family.

It localises to the cytoplasm. It carries out the reaction L-glutamate + ATP = L-glutamyl 5-phosphate + ADP. It functions in the pathway amino-acid biosynthesis; L-proline biosynthesis; L-glutamate 5-semialdehyde from L-glutamate: step 1/2. Functionally, catalyzes the transfer of a phosphate group to glutamate to form L-glutamate 5-phosphate. This is Glutamate 5-kinase from Corynebacterium glutamicum (strain ATCC 13032 / DSM 20300 / JCM 1318 / BCRC 11384 / CCUG 27702 / LMG 3730 / NBRC 12168 / NCIMB 10025 / NRRL B-2784 / 534).